Here is a 434-residue protein sequence, read N- to C-terminus: Sensor histidine kinase Hik2 (434 aa).

Residues Ile16–Ala152 enclose the GAF domain. Position 19 (Cys19) interacts with [3Fe-4S] cluster. The Histidine kinase domain occupies Asp182–Glu432. His185 is subject to Phosphohistidine; by autocatalysis. A G1 box motif is present at residues Asp357–Gly361. The G2 box motif lies at Gly386–Gly390.

The protein belongs to the chloroplast sensor kinase protein family. As to quaternary structure, exists as monomers, tetramers, hexamers and other higher-order oligomers; all are able to autophosphorylate. Upon treatment with 0.5 M NaCl only tetramers are seen, which are probably inactive. Interacts with both RppA and Rre1. It depends on [3Fe-4S] cluster as a cofactor. Autophosphorylates, probably on His-185.

The protein resides in the cytoplasm. The catalysed reaction is ATP + protein L-histidine = ADP + protein N-phospho-L-histidine.. Autophosphorylation is inhibited by Na(+) but not by Cl(-). Reducing agents dithionite, duroquinol and decyl-plastoquinone, but not NADPH or ferredoxin inhibit autophosphorylation. Oxidation of the Fe-S cluster (with potassium ferricyanide) induces a conformational change that is conducive to its autophosphorylation activity. Member of possibly 2 two-component regulatory system(s) Hik2/Rre1 and Hik2/RppA. Transduces PQ (plastoquinone) redox signals to photosystem gene expression machinery during the adjustment of photosystem stoichiometry. Reduced PQ suppresses its autophosphorylation activity (i.e. kinase activity is higher under oxidizing conditions). Member of two-component regulatory system Hik2/Rre1, controls expression of sigB (sll0306), sll0528, slr1119, slr0852 and ssr3188 in response to hyperosmotic stress. Activity responds to high salt (with a linear response as concentrations rise to 0.5 M NaCl); detects Cl(-) levels. Autophosphorylates and transfers phosphate to Rre1. May transfer phosphate to RppA in a possible Hik2/RppA two-component system. The chain is Sensor histidine kinase Hik2 from Synechocystis sp. (strain ATCC 27184 / PCC 6803 / Kazusa).